An 84-amino-acid polypeptide reads, in one-letter code: Small ribosomal subunit protein bS20 (84 aa).

Residues 1-25 (MANIVSNEKTYRHTQKVRKENHAKM) are disordered.

This sequence belongs to the bacterial ribosomal protein bS20 family.

Functionally, binds directly to 16S ribosomal RNA. In Ureaplasma urealyticum serovar 10 (strain ATCC 33699 / Western), this protein is Small ribosomal subunit protein bS20.